The sequence spans 635 residues: MTMELTGNELIKSKLIDIPERSGVYRMFDANKQVIYVGKAKNLKKRLTNYIKTDLDTKTLRMVANTCSLEYSITNSEVEALLLEAQLIKKFQPKFNILLKDDKSFPFIKLRLDHDFPQLLKYRGRALNDGKFFGPFASATEVNTTLSELQKIFKLRSCTDNYFNSRTRPCLQYEIKRCYAPCVGKINKKDYAELVGQVKDFLQGRSKELQENLSKKMEELSEQMRFEEAAEIRDRIKALSYVQLKAGITDIVKDADIIAIVEKNGHYCVEVFLYRIGQACGNIPYFPTSTENSTKEEVLKHFLLQFYQKQQVPPGIIINHEIDDKDNIIEAIRNINDFAKLSITIPASGGKLKLVQNAQENALFSLEQYLKKFAKNQELMFEVKELFNLPEIPERIEVYDNSHIQGKFAVGVMIVAGKSGFDKKEYRVFSLSSRDSITGSSKSTNNDSISCFLDTVDKPRYDTKGDDYEMLRQVLTRRLTRLKQEPHRLPSLMIIDGGKGHLGIVKEVMNKLQMDIPFVCMSKGPDRNAGLEQFHMVGREVFTLNKNLPLMKYLQILRDEAHNFAIKNHRLSRSRAIKVSSLDEIEGIGDTRKKALLHYFGSYKAVSDATLDELSKVKGISKSLAKMIFNALHKN.

Residues 20-97 (ERSGVYRMFD…IKKFQPKFNI (78 aa)) enclose the GIY-YIG domain. Residues 207 to 242 (KELQENLSKKMEELSEQMRFEEAAEIRDRIKALSYV) enclose the UVR domain.

Belongs to the UvrC family. Interacts with UvrB in an incision complex.

It localises to the cytoplasm. Functionally, the UvrABC repair system catalyzes the recognition and processing of DNA lesions. UvrC both incises the 5' and 3' sides of the lesion. The N-terminal half is responsible for the 3' incision and the C-terminal half is responsible for the 5' incision. In Rickettsia bellii (strain RML369-C), this protein is UvrABC system protein C.